The sequence spans 199 residues: Ciliary neurotrophic factor (199 aa).

Belongs to the CNTF family. Nervous system.

The protein localises to the cytoplasm. CNTF is a survival factor for various neuronal cell types. Seems to prevent the degeneration of motor axons after axotomy. The polypeptide is Ciliary neurotrophic factor (CNTF) (Oryctolagus cuniculus (Rabbit)).